An 811-amino-acid polypeptide reads, in one-letter code: Probable disease resistance protein At5g04720 (811 aa).

The RPW8 domain occupies 1–147; the sequence is MADIIGGEVV…KVDSLNEKLG (147 aa). NB-ARC domains are found at residues 180–242 and 312–437; these read VGLD…VSQS and TYDV…NVLV. 207 to 214 is a binding site for ATP; the sequence is GMSGSGKT. LRR repeat units follow at residues 650-674, 676-699, 700-722, 724-746, and 748-769; these read FPKLSDLTIDHCDDLLELPSTICGI, SLNSISITNCPRIKELPKNLSKLK, ALQLLRLYACHELNSLPVEICEL, RLKYVDISQCVSLSSLPEKIGKV, and TLEKIDTRECSLSSIPNSVVLL.

This sequence belongs to the disease resistance NB-LRR family.

Probable disease resistance protein. In Arabidopsis thaliana (Mouse-ear cress), this protein is Probable disease resistance protein At5g04720.